The chain runs to 833 residues: RNA-binding protein 5-A (833 aa).

The tract at residues 1–87 (MGSDKRVSRS…GYHSDGDYMD (87 aa)) is disordered. An RRM 1 domain is found at 102 to 182 (KTIMLRGLPI…KTIAMHYSNP (81 aa)). The RanBP2-type zinc-finger motif lies at 185-214 (KFEDWLCNKCGLYNFRRRLKCFRCGAAKAE). In terms of domain architecture, RRM 2 spans 241 to 325 (SAIILRNIGP…KTIGVDFAKS (85 aa)). Over residues 396–428 (TGAAEQGTAPQAESSSPVPATTSAVVCQSPQMY) the composition is skewed to polar residues. 2 disordered regions span residues 396–458 (TGAA…EEAA) and 523–559 (AADGAGQSGTQPNGANPGTSKEGKEKKEKPKSKTAQQ). Over residues 429–458 (QQPGSPTQSSTSTVAASATPASGTSAEEAA) the composition is skewed to low complexity. Residues 667 to 692 (LACLLCRRQFPNKDALTRHQQLSDLH) form a C2H2-type zinc finger. In terms of domain architecture, G-patch spans 761–807 (NSNIGNKMLQAMGWKEGSGLGRKSQGITAPIQAQVRMRGAGLGAKGS).

The protein belongs to the RBM5/RBM10 family. Component of the spliceosome A complex (also known as the prespliceosome). Appears to dissociate from the spliceosome upon formation of the spliceosome B complex (also known as the precatalytic spliceosome), in which the heterotrimeric U4/U6.U5 snRNPs are bound.

It is found in the nucleus. Component of the spliceosome A complex. Regulates alternative splicing of a number of mRNAs. May modulate splice site pairing after recruitment of the U1 and U2 snRNPs to the 5' and 3' splice sites of the intron. The polypeptide is RNA-binding protein 5-A (rbm5-a) (Xenopus laevis (African clawed frog)).